A 567-amino-acid polypeptide reads, in one-letter code: Geranylgeranyl transferase type-2 subunit alpha (567 aa).

6 PFTA repeats span residues 44–78 (LDES…QLET), 88–122 (LVKA…RLPE), 124–158 (NWTR…QAAV), 159–193 (PPAE…QLHP), 207–241 (VLLK…RADP), and 363–397 (VLQS…ALDP). Ser98 carries the phosphoserine modification. 5 LRR repeats span residues 442-463 (EVRV…EQLL), 464-486 (LVTH…AALR), 487-508 (CLEV…TNLP), 509-530 (RLQE…QPLA), and 534-555 (RLVL…LEQL).

This sequence belongs to the protein prenyltransferase subunit alpha family. In terms of assembly, heterotrimer composed of RABGGTA, RABGGTB and CHM; within this trimer, RABGGTA and RABGGTB form the catalytic component B, while CHM (component A) mediates peptide substrate binding. The Rab GGTase dimer (RGGT) interacts with CHM (component A) prior to Rab protein binding; the association is stabilized by geranylgeranyl pyrophosphate (GGpp). The CHM:RGGT:Rab complex is destabilized by GGpp. Interacts with non-phosphorylated form of RAB8A; phosphorylation of RAB8A at 'Thr-72' disrupts this interaction.

It carries out the reaction geranylgeranyl diphosphate + L-cysteinyl-[protein] = S-geranylgeranyl-L-cysteinyl-[protein] + diphosphate. Its activity is regulated as follows. The enzymatic reaction requires the aid of a Rab escort protein (also called component A), such as CHM. In terms of biological role, catalyzes the transfer of a geranylgeranyl moiety from geranylgeranyl diphosphate to both cysteines of Rab proteins with the C-terminal sequence -XXCC, -XCXC and -CCXX, such as RAB1A, RAB3A, RAB5A and RAB7A. The sequence is that of Geranylgeranyl transferase type-2 subunit alpha (RABGGTA) from Pongo abelii (Sumatran orangutan).